The primary structure comprises 565 residues: Effector protease OspD3 (565 aa).

This sequence belongs to the Toxin_15 family.

The protein localises to the secreted. Effector protease that disrupts necroptosis in host cells by mediating proteolytic cleavage of host RIPK1 and RIPK3. The sequence is that of Effector protease OspD3 from Shigella flexneri.